A 207-amino-acid chain; its full sequence is Peptidyl-tRNA hydrolase (207 aa).

Tyr-14 contributes to the tRNA binding site. Catalysis depends on His-19, which acts as the Proton acceptor. TRNA-binding residues include Tyr-64, Asn-66, and Asn-112.

This sequence belongs to the PTH family. In terms of assembly, monomer.

It is found in the cytoplasm. It catalyses the reaction an N-acyl-L-alpha-aminoacyl-tRNA + H2O = an N-acyl-L-amino acid + a tRNA + H(+). Hydrolyzes ribosome-free peptidyl-tRNAs (with 1 or more amino acids incorporated), which drop off the ribosome during protein synthesis, or as a result of ribosome stalling. In terms of biological role, catalyzes the release of premature peptidyl moieties from peptidyl-tRNA molecules trapped in stalled 50S ribosomal subunits, and thus maintains levels of free tRNAs and 50S ribosomes. The chain is Peptidyl-tRNA hydrolase from Rhodopseudomonas palustris (strain BisB5).